We begin with the raw amino-acid sequence, 636 residues long: MKKLLENLSLWMGIIILVTLLFGQVALNFGFGIRNEKIQFSEFLDLVEKGEVQKIVIEGYDISGVLKSGTRFYTKATQYTELIPLLRKNNVDFQVASGDSFLGLLFNILISWFPMLLLIGVWIFFMKQMQAGGNKTMTFGKSKARLLSDRSNKVTFHDVAGIDEAKEELAEIVEFLREPKKFQKLGGKIPKGCLLIGPPGTGKTLLAKAIAGEAKVPFFSISGSDFVEMFVGVGASRVRDMFEQGKKNAPCLIFIDEIDAVGRHRGVGFGGGNDEREQTLNQLLVEMDGFEANEGVIIIAATNRPDVLDPALLRPGRFDRQITISIPDIAGRQKILEVHLKKIPTAPNVEVSIIARGTPGFSGADLANLVNESALIAARRNKKVVTNEDFEYARDKILMGMERKSLVMREEEKLLTAYHEAGHAVTSLKLEASDPIHKATIIPRGRALGLVMRLPEHDRVSFTRAKMHADLIVAMGGRAAEQVIFGDDKTTSGAASDIKQATHLARSMVTKWGMSEKVGPLLYGEQNDPNNHILSIEMSNLIDSEVKQLITDALKEATKILNENIESLHRIAKALLEYETLTGQELSDLLEGKPFLKKTADDKKVVSKSSLDVEDDTVDKETLEKLESDLDTGDKE.

The Cytoplasmic portion of the chain corresponds to 1-12; sequence MKKLLENLSLWM. A helical membrane pass occupies residues 13–33; sequence GIIILVTLLFGQVALNFGFGI. Residues 34–104 are Periplasmic-facing; it reads RNEKIQFSEF…VASGDSFLGL (71 aa). A helical transmembrane segment spans residues 105–125; the sequence is LFNILISWFPMLLLIGVWIFF. Residues 126–636 are Cytoplasmic-facing; it reads MKQMQAGGNK…ESDLDTGDKE (511 aa). 197 to 204 is a binding site for ATP; sequence GPPGTGKT. Residue histidine 419 coordinates Zn(2+). Glutamate 420 is an active-site residue. Residues histidine 423 and aspartate 497 each coordinate Zn(2+).

This sequence in the central section; belongs to the AAA ATPase family. The protein in the C-terminal section; belongs to the peptidase M41 family. Homohexamer. Zn(2+) serves as cofactor.

The protein resides in the cell inner membrane. Acts as a processive, ATP-dependent zinc metallopeptidase for both cytoplasmic and membrane proteins. Plays a role in the quality control of integral membrane proteins. In Neorickettsia risticii (strain Illinois), this protein is ATP-dependent zinc metalloprotease FtsH.